The following is a 93-amino-acid chain: NAD(P)H-quinone oxidoreductase subunit 4L, chloroplastic (93 aa).

Helical transmembrane passes span 1–21 and 60–80; these read MLEHALIAGAFSFCIGISGLI and IFAIFVIAIAAAEAAIGLSIA.

It belongs to the complex I subunit 4L family. In terms of assembly, NDH is composed of at least 16 different subunits, 5 of which are encoded in the nucleus.

It is found in the plastid. The protein resides in the chloroplast thylakoid membrane. It carries out the reaction a plastoquinone + NADH + (n+1) H(+)(in) = a plastoquinol + NAD(+) + n H(+)(out). It catalyses the reaction a plastoquinone + NADPH + (n+1) H(+)(in) = a plastoquinol + NADP(+) + n H(+)(out). NDH shuttles electrons from NAD(P)H:plastoquinone, via FMN and iron-sulfur (Fe-S) centers, to quinones in the photosynthetic chain and possibly in a chloroplast respiratory chain. The immediate electron acceptor for the enzyme in this species is believed to be plastoquinone. Couples the redox reaction to proton translocation, and thus conserves the redox energy in a proton gradient. The polypeptide is NAD(P)H-quinone oxidoreductase subunit 4L, chloroplastic (Anthoceros angustus (Hornwort)).